We begin with the raw amino-acid sequence, 276 residues long: Ribosomal RNA small subunit methyltransferase A (276 aa).

6 residues coordinate S-adenosyl-L-methionine: Asn27, Leu29, Gly54, Glu75, Asp101, and Asn123.

This sequence belongs to the class I-like SAM-binding methyltransferase superfamily. rRNA adenine N(6)-methyltransferase family. RsmA subfamily.

The protein resides in the cytoplasm. It carries out the reaction adenosine(1518)/adenosine(1519) in 16S rRNA + 4 S-adenosyl-L-methionine = N(6)-dimethyladenosine(1518)/N(6)-dimethyladenosine(1519) in 16S rRNA + 4 S-adenosyl-L-homocysteine + 4 H(+). Its function is as follows. Specifically dimethylates two adjacent adenosines (A1518 and A1519) in the loop of a conserved hairpin near the 3'-end of 16S rRNA in the 30S particle. May play a critical role in biogenesis of 30S subunits. The protein is Ribosomal RNA small subunit methyltransferase A of Bartonella bacilliformis (strain ATCC 35685 / KC583 / Herrer 020/F12,63).